Reading from the N-terminus, the 103-residue chain is Small integral membrane protein 32 (103 aa).

Residues 55 to 75 (YLLLFFLLLLSVALVVLFIGC) form a helical membrane-spanning segment.

Its subcellular location is the membrane. The polypeptide is Small integral membrane protein 32 (Homo sapiens (Human)).